A 640-amino-acid polypeptide reads, in one-letter code: Threonine--tRNA ligase (640 aa).

Residues M1–T61 enclose the TGS domain. The catalytic stretch occupies residues D242–P533. Residues C333, H384, and H510 each coordinate Zn(2+).

This sequence belongs to the class-II aminoacyl-tRNA synthetase family. As to quaternary structure, homodimer. It depends on Zn(2+) as a cofactor.

It is found in the cytoplasm. It catalyses the reaction tRNA(Thr) + L-threonine + ATP = L-threonyl-tRNA(Thr) + AMP + diphosphate + H(+). Functionally, catalyzes the attachment of threonine to tRNA(Thr) in a two-step reaction: L-threonine is first activated by ATP to form Thr-AMP and then transferred to the acceptor end of tRNA(Thr). Also edits incorrectly charged L-seryl-tRNA(Thr). The sequence is that of Threonine--tRNA ligase from Pseudomonas fluorescens (strain Pf0-1).